We begin with the raw amino-acid sequence, 311 residues long: D-alanine--D-alanine ligase (311 aa).

The ATP-grasp domain occupies 106-301 (KLLWRGAELP…FDELCWRILL (196 aa)). An ATP-binding site is contributed by 132 to 187 (IGSVGLPLMIKPAHEGSSIGMAKVERPEELEAARAEAARYDDLVLAERWIEGGEYT). Residues Asp-255, Glu-268, and Asn-270 each contribute to the Mg(2+) site.

Belongs to the D-alanine--D-alanine ligase family. The cofactor is Mg(2+). Requires Mn(2+) as cofactor.

The protein resides in the cytoplasm. The catalysed reaction is 2 D-alanine + ATP = D-alanyl-D-alanine + ADP + phosphate + H(+). Its pathway is cell wall biogenesis; peptidoglycan biosynthesis. Its function is as follows. Cell wall formation. This is D-alanine--D-alanine ligase from Alkalilimnicola ehrlichii (strain ATCC BAA-1101 / DSM 17681 / MLHE-1).